A 1224-amino-acid chain; its full sequence is ATP-dependent helicase/deoxyribonuclease subunit B (1224 aa).

The UvrD-like helicase ATP-binding domain maps to 1 to 326 (MSLRFILGRA…VCAAANRRSE (326 aa)). 8 to 15 (GRAGTGKS) contacts ATP. Positions 283-584 (QSAPRFQHPE…KLSLIPPELD (302 aa)) constitute a UvrD-like helicase C-terminal domain. [4Fe-4S] cluster-binding residues include Cys-841, Cys-1176, Cys-1179, and Cys-1185.

It belongs to the helicase family. AddB/RexB type 1 subfamily. As to quaternary structure, heterodimer of AddA and AddB. Requires Mg(2+) as cofactor. [4Fe-4S] cluster serves as cofactor.

In terms of biological role, the heterodimer acts as both an ATP-dependent DNA helicase and an ATP-dependent, dual-direction single-stranded exonuclease. Recognizes the chi site generating a DNA molecule suitable for the initiation of homologous recombination. The AddB subunit has 5' -&gt; 3' nuclease activity but not helicase activity. The chain is ATP-dependent helicase/deoxyribonuclease subunit B from Heliobacterium modesticaldum (strain ATCC 51547 / Ice1).